A 471-amino-acid polypeptide reads, in one-letter code: Maintenance of mitochondrial morphology protein 1 (471 aa).

Topologically, residues 1 to 21 are lumenal; that stretch reads MSSPQNTSCPPSQHSLSFTQG. A helical membrane pass occupies residues 22-42; the sequence is LLLGQLSVVLLIGAFIKFFIF. Over 43 to 471 the chain is Cytoplasmic; it reads GESPSSSSRG…GSLPGAPAVA (429 aa). In terms of domain architecture, SMP-LTD spans 128–370; it reads QPESLDWFNV…EPRVQLVALP (243 aa). Disordered stretches follow at residues 271–306, 395–415, and 448–471; these read GTTESSPHLPHPENQNESKPSRQDPEIPTNKDGVRS, EDPATKATHSGFTPVNANRDG, and RGDTQSVGEQLRIPGSLPGAPAVA. Residues 280–295 show a composition bias toward basic and acidic residues; it reads PHPENQNESKPSRQDP. Residues 401-410 show a composition bias toward polar residues; that stretch reads ATHSGFTPVN.

Belongs to the MMM1 family. As to quaternary structure, homodimer. Component of the ER-mitochondria encounter structure (ERMES) or MDM complex, composed of MMM1, MDM10, MDM12 and MDM34. An MMM1 homodimer associates with one molecule of MDM12 on each side in a pairwise head-to-tail manner, and the SMP-LTD domains of MMM1 and MDM12 generate a continuous hydrophobic tunnel for phospholipid trafficking.

The protein resides in the endoplasmic reticulum membrane. In terms of biological role, component of the ERMES/MDM complex, which serves as a molecular tether to connect the endoplasmic reticulum (ER) and mitochondria. Components of this complex are involved in the control of mitochondrial shape and protein biogenesis, and function in nonvesicular lipid trafficking between the ER and mitochondria. The MDM12-MMM1 subcomplex functions in the major beta-barrel assembly pathway that is responsible for biogenesis of all outer membrane beta-barrel proteins, and acts in a late step after the SAM complex. The MDM10-MDM12-MMM1 subcomplex further acts in the TOM40-specific pathway after the action of the MDM12-MMM1 complex. Essential for establishing and maintaining the structure of mitochondria and maintenance of mtDNA nucleoids. This Arthroderma otae (strain ATCC MYA-4605 / CBS 113480) (Microsporum canis) protein is Maintenance of mitochondrial morphology protein 1.